We begin with the raw amino-acid sequence, 475 residues long: 7-dehydrocholesterol reductase (475 aa).

Residues 1-21 (MAAKSQPNIPKAKSLDGVTND) form a disordered region. Serine 14 is modified (phosphoserine). 6 helical membrane passes run 40-60 (LASVIFLLLFAPFIVYYFIMA), 154-174 (THLLWFANAHLLSWFSPTIIF), 177-197 (WIPLLWCANILGYAVSTFAMV), 266-286 (VTNAMVLVNVLQAIYVIDFFW), 306-326 (LGWGDCVWLPYLYTLQGLYLV), and 331-351 (QLSTPHAVGVLLLGLVGYYIF). NADP(+) is bound by residues lysine 358, arginine 362, leucine 395, tryptophan 400, and 407–408 (NY). A helical transmembrane segment spans residues 420 to 440 (LACGGGHLLPYFYIIYMAILL). NADP(+)-binding positions include aspartate 447, 451 to 455 (CASKY), and tyrosine 462.

The protein belongs to the ERG4/ERG24 family. As to quaternary structure, interacts with DHCR24; this interaction regulates DHCR7 activity. Interacts with TMEM147. As to expression, widely expressed. Most abundant in adrenal gland, liver, testis, and brain.

The protein localises to the endoplasmic reticulum membrane. The enzyme catalyses cholesterol + NADP(+) = 7-dehydrocholesterol + NADPH + H(+). It catalyses the reaction 7-dehydrodesmosterol + NADPH + H(+) = desmosterol + NADP(+). It carries out the reaction 5,6alpha-epoxy-5alpha-cholestan-3beta-ol + H2O = 5alpha-cholestane-3beta,5,6beta-triol. The catalysed reaction is 5,6beta-epoxy-5beta-cholestan-3beta-ol + H2O = 5alpha-cholestane-3beta,5,6beta-triol. It functions in the pathway steroid biosynthesis; cholesterol biosynthesis. 7-DHC reductase and cholesterol-5,6-epoxide hydrolase (ChEH) activities are inhibited by tamoxifen and the selective AEBS ligand (4-benzyl-phenoxy)-ethyl-N-pyrrolidine (PBPE). ChEH activity is inhibited by oleic acid. Its function is as follows. Oxidoreductase that catalyzes the last step of the cholesterol synthesis pathway, which transforms cholesta-5,7-dien-3beta-ol (7-dehydrocholesterol,7-DHC) into cholesterol by reducing the C7-C8 double bond of its sterol core. Can also metabolize cholesta-5,7,24-trien-3beta-ol (7-dehydrodemosterol, 7-DHD) to desmosterol, which is then metabolized by the Delta(24)-sterol reductase (DHCR24) to cholesterol. Modulates ferroptosis (a form of regulated cell death driven by iron-dependent lipid peroxidation) through the metabolic breakdown of the anti-ferroptotic metabolites 7-DHC and 7-DHD which, when accumulated, divert the propagation of peroxyl radical-mediated damage from phospholipid components to its sterol core, protecting plasma and mitochondrial membranes from phospholipid autoxidation. In terms of biological role, component of the microsomal antiestrogen binding site (AEBS), a multiproteic complex at the ER membrane that consists of an association between cholestenol Delta-isomerase/EBP and DHCR7. This complex is responsible for cholesterol-5,6-epoxide hydrolase (ChEH) activity, which consists in the hydration of cholesterol-5,6-epoxides (5,6-EC) into cholestane-3beta,5alpha,6beta-triol (CT). The precise role of each component of this complex has not been described yet. This chain is 7-dehydrocholesterol reductase, found in Homo sapiens (Human).